Reading from the N-terminus, the 217-residue chain is Chloramphenicol acetyltransferase (217 aa).

The Proton acceptor role is filled by histidine 193.

This sequence belongs to the chloramphenicol acetyltransferase family. In terms of assembly, homotrimer.

It carries out the reaction chloramphenicol + acetyl-CoA = chloramphenicol 3-acetate + CoA. In terms of biological role, this enzyme is an effector of chloramphenicol resistance in bacteria. The polypeptide is Chloramphenicol acetyltransferase (cat) (Proteus mirabilis).